A 369-amino-acid chain; its full sequence is Flagellar P-ring protein (369 aa).

The signal sequence occupies residues 1-22 (MIKLKQLIAATLLLSTAFGVHA).

Belongs to the FlgI family. The basal body constitutes a major portion of the flagellar organelle and consists of four rings (L,P,S, and M) mounted on a central rod.

The protein localises to the periplasm. It localises to the bacterial flagellum basal body. Assembles around the rod to form the L-ring and probably protects the motor/basal body from shearing forces during rotation. In Pseudomonas syringae pv. syringae (strain B728a), this protein is Flagellar P-ring protein.